Reading from the N-terminus, the 212-residue chain is Ribonuclease HII (212 aa).

The 185-residue stretch at 28–212 (SIIAGVDEVG…KSFAPIRQVV (185 aa)) folds into the RNase H type-2 domain. Residues D34, E35, and D127 each contribute to the a divalent metal cation site.

Belongs to the RNase HII family. Mn(2+) is required as a cofactor. Requires Mg(2+) as cofactor.

The protein localises to the cytoplasm. It carries out the reaction Endonucleolytic cleavage to 5'-phosphomonoester.. Endonuclease that specifically degrades the RNA of RNA-DNA hybrids. The chain is Ribonuclease HII from Chlamydia caviae (strain ATCC VR-813 / DSM 19441 / 03DC25 / GPIC) (Chlamydophila caviae).